A 107-amino-acid polypeptide reads, in one-letter code: uncharacterized protein (107 aa).

The next 2 helical transmembrane spans lie at 11–31 (CVNFVIIIGIPLLIEASILCI) and 58–78 (LFFLSFYMLHFPITLSILAFQ).

The protein localises to the mitochondrion membrane. This is an uncharacterized protein from Saccharomyces cerevisiae (strain ATCC 204508 / S288c) (Baker's yeast).